A 256-amino-acid chain; its full sequence is Thiazole synthase (256 aa).

The active-site Schiff-base intermediate with DXP is Lys99. 1-deoxy-D-xylulose 5-phosphate is bound by residues Gly160, 186–187, and 208–209; these read AG and NT.

It belongs to the ThiG family. In terms of assembly, homotetramer. Forms heterodimers with either ThiH or ThiS.

The protein resides in the cytoplasm. The catalysed reaction is [ThiS sulfur-carrier protein]-C-terminal-Gly-aminoethanethioate + 2-iminoacetate + 1-deoxy-D-xylulose 5-phosphate = [ThiS sulfur-carrier protein]-C-terminal Gly-Gly + 2-[(2R,5Z)-2-carboxy-4-methylthiazol-5(2H)-ylidene]ethyl phosphate + 2 H2O + H(+). The protein operates within cofactor biosynthesis; thiamine diphosphate biosynthesis. Its function is as follows. Catalyzes the rearrangement of 1-deoxy-D-xylulose 5-phosphate (DXP) to produce the thiazole phosphate moiety of thiamine. Sulfur is provided by the thiocarboxylate moiety of the carrier protein ThiS. In vitro, sulfur can be provided by H(2)S. In Neorickettsia sennetsu (strain ATCC VR-367 / Miyayama) (Ehrlichia sennetsu), this protein is Thiazole synthase.